A 148-amino-acid chain; its full sequence is 3-dehydroquinate dehydratase (148 aa).

The Proton acceptor role is filled by Y24. Substrate-binding residues include N75, H81, and D88. The active-site Proton donor is H101. Substrate contacts are provided by residues 102–103 (LS) and R112.

Belongs to the type-II 3-dehydroquinase family. In terms of assembly, homododecamer.

The catalysed reaction is 3-dehydroquinate = 3-dehydroshikimate + H2O. It participates in metabolic intermediate biosynthesis; chorismate biosynthesis; chorismate from D-erythrose 4-phosphate and phosphoenolpyruvate: step 3/7. Its function is as follows. Catalyzes a trans-dehydration via an enolate intermediate. This Bartonella henselae (strain ATCC 49882 / DSM 28221 / CCUG 30454 / Houston 1) (Rochalimaea henselae) protein is 3-dehydroquinate dehydratase.